The primary structure comprises 429 residues: Glutamate-1-semialdehyde 2,1-aminomutase (429 aa).

Position 265 is an N6-(pyridoxal phosphate)lysine (lysine 265).

Belongs to the class-III pyridoxal-phosphate-dependent aminotransferase family. HemL subfamily. As to quaternary structure, homodimer. The cofactor is pyridoxal 5'-phosphate.

Its subcellular location is the cytoplasm. The enzyme catalyses (S)-4-amino-5-oxopentanoate = 5-aminolevulinate. It functions in the pathway porphyrin-containing compound metabolism; protoporphyrin-IX biosynthesis; 5-aminolevulinate from L-glutamyl-tRNA(Glu): step 2/2. This chain is Glutamate-1-semialdehyde 2,1-aminomutase, found in Legionella pneumophila (strain Lens).